Reading from the N-terminus, the 253-residue chain is Triosephosphate isomerase (253 aa).

Residue 9–11 (NWK) participates in substrate binding. The Electrophile role is filled by His95. Catalysis depends on Glu167, which acts as the Proton acceptor. Residues Gly173, Ser213, and 234–235 (GG) each bind substrate. Ser213 is modified (phosphoserine).

Belongs to the triosephosphate isomerase family. Homodimer.

It is found in the cytoplasm. The catalysed reaction is D-glyceraldehyde 3-phosphate = dihydroxyacetone phosphate. The protein operates within carbohydrate biosynthesis; gluconeogenesis. Its pathway is carbohydrate degradation; glycolysis; D-glyceraldehyde 3-phosphate from glycerone phosphate: step 1/1. Functionally, involved in the gluconeogenesis. Catalyzes stereospecifically the conversion of dihydroxyacetone phosphate (DHAP) to D-glyceraldehyde-3-phosphate (G3P). This chain is Triosephosphate isomerase, found in Bacillus velezensis (strain DSM 23117 / BGSC 10A6 / LMG 26770 / FZB42) (Bacillus amyloliquefaciens subsp. plantarum).